A 138-amino-acid polypeptide reads, in one-letter code: Small ribosomal subunit protein uS11c (138 aa).

Residues 1–22 are disordered; sequence MAKSIPKTGSRKNVRIGSRNQT.

It belongs to the universal ribosomal protein uS11 family. As to quaternary structure, part of the 30S ribosomal subunit.

It is found in the plastid. The protein resides in the chloroplast. This is Small ribosomal subunit protein uS11c from Phaseolus angularis (Azuki bean).